A 93-amino-acid polypeptide reads, in one-letter code: Putative pterin-4-alpha-carbinolamine dehydratase (93 aa).

It belongs to the pterin-4-alpha-carbinolamine dehydratase family.

It carries out the reaction (4aS,6R)-4a-hydroxy-L-erythro-5,6,7,8-tetrahydrobiopterin = (6R)-L-erythro-6,7-dihydrobiopterin + H2O. The chain is Putative pterin-4-alpha-carbinolamine dehydratase from Roseiflexus sp. (strain RS-1).